The following is a 212-amino-acid chain: uncharacterized protein (212 aa).

Positions 29–146 (KGKAGEKLVK…AAFHPKCSLK (118 aa)) constitute an NERD domain.

This is an uncharacterized protein from Bacillus anthracis.